A 261-amino-acid polypeptide reads, in one-letter code: Leukocyte receptor cluster member 1 homolog (261 aa).

A disordered region spans residues methionine 1–histidine 261. A compositionally biased stretch (basic and acidic residues) spans arginine 12–valine 38. The stretch at asparagine 16 to arginine 46 forms a coiled coil. Serine 59 carries the phosphoserine modification. Composition is skewed to basic and acidic residues over residues leucine 78–lysine 109, proline 147–lysine 163, and serine 171–alanine 211. Residues serine 192–valine 222 adopt a coiled-coil conformation. Over residues glutamate 212 to valine 228 the composition is skewed to low complexity. The residue at position 242 (serine 242) is a Phosphoserine.

In Mus musculus (Mouse), this protein is Leukocyte receptor cluster member 1 homolog (Leng1).